Reading from the N-terminus, the 67-residue chain is DNA-directed RNA polymerase subunit omega (67 aa).

This sequence belongs to the RNA polymerase subunit omega family. The RNAP catalytic core consists of 2 alpha, 1 beta, 1 beta' and 1 omega subunit. When a sigma factor is associated with the core the holoenzyme is formed, which can initiate transcription.

It carries out the reaction RNA(n) + a ribonucleoside 5'-triphosphate = RNA(n+1) + diphosphate. Its function is as follows. Promotes RNA polymerase assembly. Latches the N- and C-terminal regions of the beta' subunit thereby facilitating its interaction with the beta and alpha subunits. This is DNA-directed RNA polymerase subunit omega from Bacillus velezensis (strain DSM 23117 / BGSC 10A6 / LMG 26770 / FZB42) (Bacillus amyloliquefaciens subsp. plantarum).